The sequence spans 392 residues: DNA replication and repair protein RecF (392 aa).

30–37 (GPNAAGKT) serves as a coordination point for ATP.

It belongs to the RecF family.

It localises to the cytoplasm. In terms of biological role, the RecF protein is involved in DNA metabolism; it is required for DNA replication and normal SOS inducibility. RecF binds preferentially to single-stranded, linear DNA. It also seems to bind ATP. The chain is DNA replication and repair protein RecF from Chloroflexus aurantiacus (strain ATCC 29364 / DSM 637 / Y-400-fl).